A 503-amino-acid polypeptide reads, in one-letter code: Opine oxidase subunit A (503 aa).

To T-protein and to dimethylglycine dehydrogenase. As to quaternary structure, heterodimer of a subunit A and a subunit B.

Its pathway is opine metabolism; octopine degradation. Its function is as follows. Oxidative cleavage of octopine into L-arginine and pyruvate. The protein is Opine oxidase subunit A (ooxA) of Agrobacterium tumefaciens (strain Ach5).